The primary structure comprises 211 residues: tRNA (guanine-N(7)-)-methyltransferase (211 aa).

Positions 44, 69, 96, and 118 each coordinate S-adenosyl-L-methionine. Asp-118 is a catalytic residue. Lys-122 provides a ligand contact to substrate. Positions 124 to 129 are interaction with RNA; that stretch reads RHEKRR. Substrate contacts are provided by residues Asp-154 and 191–194; that span reads TEYE.

It belongs to the class I-like SAM-binding methyltransferase superfamily. TrmB family.

The catalysed reaction is guanosine(46) in tRNA + S-adenosyl-L-methionine = N(7)-methylguanosine(46) in tRNA + S-adenosyl-L-homocysteine. The protein operates within tRNA modification; N(7)-methylguanine-tRNA biosynthesis. Functionally, catalyzes the formation of N(7)-methylguanine at position 46 (m7G46) in tRNA. This chain is tRNA (guanine-N(7)-)-methyltransferase, found in Streptococcus equi subsp. zooepidemicus (strain MGCS10565).